A 493-amino-acid chain; its full sequence is Sodium-coupled neutral amino acid symporter 2 (493 aa).

The Cytoplasmic portion of the chain corresponds to 1-72 (MNNAEVLNVA…LPGTTSFGMS (72 aa)). The tract at residues 1–92 (MNNAEVLNVA…SGILGLSYAM (92 aa)) is regulates protein turnover upon amino acid deprivation. The chain crosses the membrane as a helical span at residues 73 to 92 (VFNLSNAIVGSGILGLSYAM). Na(+) is bound at residue Asn-78. At 93 to 98 (ANTGIA) the chain is on the extracellular side. A helical membrane pass occupies residues 99 to 119 (LFMILLVFVTVFSLYSIHLLL). The Cytoplasmic portion of the chain corresponds to 120 to 154 (KTANEGGSLLYEQLGLKAFGIPGKLAASGSVTLQN). The helical transmembrane segment at 155–173 (IGAMSSYLYIVKYELPLVI) threads the bilayer. Residues 174–184 (KALMDIKESNG) are Extracellular-facing. The helical transmembrane segment at 185 to 205 (EWYLNGDYLVIMVSLAIILPL) threads the bilayer. At 206-213 (SLLRNLGY) the chain is on the cytoplasmic side. The helical transmembrane segment at 214-234 (LGYTSGFSPLCMVFFLIVVIY) threads the bilayer. The Extracellular segment spans residues 235–279 (KKFEIPCPLEAMNMTSNSSSHDHMAHNETDDEMCKPKYFVFNSQT). A disulfide bridge links Cys-241 with Cys-268. N-linked (GlcNAc...) asparagine glycans are attached at residues Asn-247, Asn-251, and Asn-261. Residues 280-300 (VYAVPILTFSFVCHPAVLPIY) traverse the membrane as a helical segment. The Cytoplasmic segment spans residues 301-316 (QELKGRSRRRMMNVSN). Residues 317 to 337 (VSFFAMFIMYLLAALFGYLTF) form a helical membrane-spanning segment. The Extracellular portion of the chain corresponds to 338–358 (YSKVEPELLHTYSKVFGAGVI). The helical transmembrane segment at 359–379 (FVVVRLAVLMAVTLTVPIVIF) threads the bilayer. Thr-373 is a Na(+) binding site. Residues 380-400 (PIRSSLNELFCSGKDFAWIRH) are Cytoplasmic-facing. The chain crosses the membrane as a helical span at residues 401-421 (ILITFLILAFTNVLVIFVPTI). Topologically, residues 422-423 (RD) are extracellular. The helical transmembrane segment at 424–444 (IFGFIGASAAAMLVFILPSAF) threads the bilayer. The Cytoplasmic portion of the chain corresponds to 445–459 (YIRLVKKESMKSVQK). The chain crosses the membrane as a helical span at residues 460–482 (IGALLFLIGGIIVMIGSMTLIIL). Residues 483–493 (DWIHNSTSGGN) are Extracellular-facing.

Belongs to the amino acid/polyamine transporter 2 family.

It is found in the cell membrane. It catalyses the reaction L-alanine(in) + Na(+)(in) = L-alanine(out) + Na(+)(out). The catalysed reaction is glycine(in) + Na(+)(in) = glycine(out) + Na(+)(out). It carries out the reaction L-serine(in) + Na(+)(in) = L-serine(out) + Na(+)(out). The enzyme catalyses L-proline(in) + Na(+)(in) = L-proline(out) + Na(+)(out). It catalyses the reaction L-methionine(in) + Na(+)(in) = L-methionine(out) + Na(+)(out). The catalysed reaction is L-histidine(in) + Na(+)(in) = L-histidine(out) + Na(+)(out). It carries out the reaction L-asparagine(in) + Na(+)(in) = L-asparagine(out) + Na(+)(out). The enzyme catalyses L-glutamine(in) + Na(+)(in) = L-glutamine(out) + Na(+)(out). It catalyses the reaction L-threonine(in) + Na(+)(in) = L-threonine(out) + Na(+)(out). The catalysed reaction is L-leucine(in) + Na(+)(in) = L-leucine(out) + Na(+)(out). It carries out the reaction L-phenylalanine(in) + Na(+)(in) = L-phenylalanine(out) + Na(+)(out). Inhibited by N-methyl-D-glucamine. Inhibited by choline. Allosteric regulation of sodium ions binding by pH. Its function is as follows. Symporter that cotransports neutral amino acids and sodium ions from the extracellular to the intracellular side of the cell membrane. The transport is pH-sensitive, Li(+)-intolerant, electrogenic, driven by the Na(+) electrochemical gradient and cotransports of neutral amino acids and sodium ions with a stoichiometry of 1:1. This is Sodium-coupled neutral amino acid symporter 2 from Xenopus tropicalis (Western clawed frog).